Consider the following 213-residue polypeptide: Flagellar transcriptional regulator FlhC (213 aa).

Zn(2+)-binding residues include Cys138, Cys141, Cys158, and Cys161.

The protein belongs to the FlhC family. In terms of assembly, heterohexamer composed of two FlhC and four FlhD subunits. Each FlhC binds a FlhD dimer, forming a heterotrimer, and a hexamer assembles by dimerization of two heterotrimers. The cofactor is Zn(2+).

It is found in the cytoplasm. Functionally, functions in complex with FlhD as a master transcriptional regulator that regulates transcription of several flagellar and non-flagellar operons by binding to their promoter region. Activates expression of class 2 flagellar genes, including fliA, which is a flagellum-specific sigma factor that turns on the class 3 genes. Also regulates genes whose products function in a variety of physiological pathways. This Cupriavidus metallidurans (strain ATCC 43123 / DSM 2839 / NBRC 102507 / CH34) (Ralstonia metallidurans) protein is Flagellar transcriptional regulator FlhC.